The primary structure comprises 470 residues: 3-isopropylmalate dehydratase large subunit (470 aa).

3 residues coordinate [4Fe-4S] cluster: Cys349, Cys409, and Cys412.

Belongs to the aconitase/IPM isomerase family. LeuC type 1 subfamily. Heterodimer of LeuC and LeuD. [4Fe-4S] cluster serves as cofactor.

It carries out the reaction (2R,3S)-3-isopropylmalate = (2S)-2-isopropylmalate. It functions in the pathway amino-acid biosynthesis; L-leucine biosynthesis; L-leucine from 3-methyl-2-oxobutanoate: step 2/4. In terms of biological role, catalyzes the isomerization between 2-isopropylmalate and 3-isopropylmalate, via the formation of 2-isopropylmaleate. The polypeptide is 3-isopropylmalate dehydratase large subunit (Afipia carboxidovorans (strain ATCC 49405 / DSM 1227 / KCTC 32145 / OM5) (Oligotropha carboxidovorans)).